The chain runs to 802 residues: Aldehyde dehydrogenase family 16 member A1 (802 aa).

Belongs to the aldehyde dehydrogenase family. Interacts with SPG21.

The protein is Aldehyde dehydrogenase family 16 member A1 (Aldh16a1) of Mus musculus (Mouse).